A 155-amino-acid chain; its full sequence is Ribosomal RNA large subunit methyltransferase H (155 aa).

Residues Leu-72, Gly-103, and 122–127 each bind S-adenosyl-L-methionine; that span reads LGRMVW.

This sequence belongs to the RNA methyltransferase RlmH family. As to quaternary structure, homodimer.

The protein resides in the cytoplasm. The enzyme catalyses pseudouridine(1915) in 23S rRNA + S-adenosyl-L-methionine = N(3)-methylpseudouridine(1915) in 23S rRNA + S-adenosyl-L-homocysteine + H(+). In terms of biological role, specifically methylates the pseudouridine at position 1915 (m3Psi1915) in 23S rRNA. The sequence is that of Ribosomal RNA large subunit methyltransferase H from Cereibacter sphaeroides (strain ATCC 17029 / ATH 2.4.9) (Rhodobacter sphaeroides).